Consider the following 193-residue polypeptide: GTP cyclohydrolase 1 (193 aa).

Zn(2+) contacts are provided by Cys73, His76, and Cys144.

The protein belongs to the GTP cyclohydrolase I family. As to quaternary structure, homomer.

The catalysed reaction is GTP + H2O = 7,8-dihydroneopterin 3'-triphosphate + formate + H(+). It functions in the pathway cofactor biosynthesis; 7,8-dihydroneopterin triphosphate biosynthesis; 7,8-dihydroneopterin triphosphate from GTP: step 1/1. The sequence is that of GTP cyclohydrolase 1 from Hyperthermus butylicus (strain DSM 5456 / JCM 9403 / PLM1-5).